The sequence spans 607 residues: MSAILSADDLNDFISPGVACIKPVETLPKNESSNSQNPYEVTTEDKVQPENLPPAQISLTDCLACSGCVTSAEAVLISLQSHAEVLNTLDAYPELPLTQNHNGPYTGSSDALDGESRIFVASVSPQVRASLAATYGISEKEATYMIDQFLSGPHGLRAGGKHGSGFSWVVDTNVMRDAILVLTADEVSETLKEPSARAISKDTLPKRPVLSSACPGWICYAEKTHPFVLPHLSRLKSPQALTGTFLKTVLSKALGVPPSRVWHLAIMPCFDKKLEASREELTDVSWSPLDGGVPLTESNKPVRDVDCVITTRELLTLASSRGISLPTLPLKSLAPSYTPHFPDETLNAFLFRKQNGSEQSMEAGTSGGYLHHVLKTFQAKNPGSEIVTQRGRNADVVEYSLMSPGGEPLMKAARYYGFRNIQNLVRKLKPARVSRLPGARVPAASAGGNRRQPISRNSASAGSGTDFAYVEVMACPGGCTNGGGQIRIEDAREASTSTQSVTAVENPSKPTPHEQRAWLARVDEAYFSAESDAEGEMDGQAQPLTIPEREARVHEAFEYWSNLMNIPLSKLVYTTYREVESDVGKPKDAPIDTTRVVELAGKIGGGW.

C20 is a binding site for [4Fe-4S] cluster. The disordered stretch occupies residues 28 to 47 (PKNESSNSQNPYEVTTEDKV). Positions 29–40 (KNESSNSQNPYE) are enriched in polar residues. [4Fe-4S] cluster contacts are provided by C62, C65, C68, C214, and C269. Residues 439-461 (ARVPAASAGGNRRQPISRNSASA) are disordered. The span at 452-461 (QPISRNSASA) shows a compositional bias: polar residues. [4Fe-4S] cluster is bound by residues C475 and C479. Residues 494 to 505 (ASTSTQSVTAVE) show a composition bias toward polar residues. A disordered region spans residues 494 to 513 (ASTSTQSVTAVENPSKPTPH).

This sequence belongs to the NARF family.

Its function is as follows. Component of the cytosolic Fe/S protein assembly machinery. Required for maturation of extramitochondrial Fe/S proteins. May play a role in the transfer of pre-assembled Fe/S clusters to target apoproteins. The chain is Cytosolic Fe-S cluster assembly factor nar1 (nar1) from Aspergillus oryzae (strain ATCC 42149 / RIB 40) (Yellow koji mold).